The sequence spans 73 residues: Gas vesicle protein M2 (73 aa).

Belongs to the gas vesicle GvpA family. As to quaternary structure, gvpF to GvpM interact with each other in vitro, and may form multi-subunit complex(es). Might interact with GvpA.

Its subcellular location is the gas vesicle. Functionally, proteins GvpF to GvpM might be involved in nucleating gas vesicle formation. A minor component of the gas vesicle. Gas vesicles are hollow, gas filled proteinaceous nanostructures found in several microbial planktonic microorganisms. They allow positioning of halobacteria at the optimal depth for growth in the poorly aerated, shallow brine pools of their habitat. Expression of 2 c-vac DNA fragments containing 2 divergently transcribed regions (gvpE-gvpF-gvpG-gvpH-gvpI-gvpJ-gvpK-gvpL-gvpM and gvpA-gvpC-gvpN-gvpO) allows H.volcanii to produce gas vesicles. The chain is Gas vesicle protein M2 from Halobacterium salinarum (strain ATCC 700922 / JCM 11081 / NRC-1) (Halobacterium halobium).